Here is a 465-residue protein sequence, read N- to C-terminus: Cysteine--tRNA ligase (465 aa).

C30 lines the Zn(2+) pocket. The short motif at 32–42 (ITVYDYCHVGH) is the 'HIGH' region element. Zn(2+)-binding residues include C214, H239, and E243. The 'KMSKS' region signature appears at 271–275 (KMSKS). ATP is bound at residue K274.

The protein belongs to the class-I aminoacyl-tRNA synthetase family. In terms of assembly, monomer. Zn(2+) serves as cofactor.

It localises to the cytoplasm. It carries out the reaction tRNA(Cys) + L-cysteine + ATP = L-cysteinyl-tRNA(Cys) + AMP + diphosphate. The polypeptide is Cysteine--tRNA ligase (Burkholderia ambifaria (strain MC40-6)).